Here is a 376-residue protein sequence, read N- to C-terminus: Small RNA 2'-O-methyltransferase (376 aa).

The S-adenosyl-L-methionine site is built by Thr49, Asp67, and Ser103. Mg(2+)-binding residues include Glu121, Glu124, His125, and His171.

It belongs to the methyltransferase superfamily. HEN1 family. Requires Mg(2+) as cofactor.

It localises to the cytoplasm. The catalysed reaction is small RNA 3'-end nucleotide + S-adenosyl-L-methionine = small RNA 3'-end 2'-O-methylnucleotide + S-adenosyl-L-homocysteine + H(+). Its function is as follows. Methyltransferase that adds a 2'-O-methyl group at the 3'-end of piRNAs, a class of 24 to 30 nucleotide RNAs that are generated by a Dicer-independent mechanism and are primarily derived from transposons and other repeated sequence elements. This probably protects the 3'-end of piRNAs from uridylation activity and subsequent degradation. Stabilization of piRNAs is essential for gametogenesis. This is Small RNA 2'-O-methyltransferase (HENMT1) from Gallus gallus (Chicken).